The following is a 159-amino-acid chain: Transcriptional repressor NrdR (159 aa).

Polar residues predominate over residues 1-11; the sequence is MQCPSCQNTDS. Positions 1-20 are disordered; sequence MQCPSCQNTDSRVLESRSAD. A zinc finger spans residues 3-34; sequence CPSCQNTDSRVLESRSADSGRSVRRRRECLNC. Positions 49–139 constitute an ATP-cone domain; it reads INVLKRSGAK…VYRQFNGIND (91 aa).

Belongs to the NrdR family. Requires Zn(2+) as cofactor.

In terms of biological role, negatively regulates transcription of bacterial ribonucleotide reductase nrd genes and operons by binding to NrdR-boxes. The protein is Transcriptional repressor NrdR of Prochlorococcus marinus (strain NATL1A).